A 586-amino-acid chain; its full sequence is Kelch-like protein 7 (586 aa).

Residues 44 to 111 enclose the BTB domain; sequence CDVILMVQER…AYTARISVNS (68 aa). The region spanning 146–248 is the BACK domain; sequence CLGISVLAEC…SKNFLSKTVQ (103 aa). Kelch repeat units follow at residues 294 to 336, 337 to 382, 383 to 430, 431 to 481, 483 to 528, and 530 to 575; these read RIAL…FWDN, VVYI…AAEG, KIYT…EANG, LIYV…FVKD, IFAV…AVGS, and VYVL…CVVD.

Homodimer. Component of the BCR(KLHL7) E3 ubiquitin ligase complex.

It is found in the nucleus. The protein resides in the cytoplasm. It participates in protein modification; protein ubiquitination. Functionally, substrate-specific adapter of a BCR (BTB-CUL3-RBX1) E3 ubiquitin ligase complex. The BCR(KLHL7) complex acts by mediating ubiquitination and subsequent degradation of substrate proteins. Probably mediates 'Lys-48'-linked ubiquitination. In Gallus gallus (Chicken), this protein is Kelch-like protein 7 (KLHL7).